Reading from the N-terminus, the 114-residue chain is Photosystem II reaction center Psb28 protein (114 aa).

The protein belongs to the Psb28 family. Part of the photosystem II complex.

It is found in the plastid. The protein localises to the chloroplast thylakoid membrane. The protein is Photosystem II reaction center Psb28 protein of Thalassiosira pseudonana (Marine diatom).